Here is a 332-residue protein sequence, read N- to C-terminus: uncharacterized protein (332 aa).

Composition is skewed to acidic residues over residues 290-314 (EDID…DSFG) and 323-332 (EDSEDSDNSE). Residues 290–332 (EDIDDIDDSDESDDSDDSEDSDSFGDSDSSGNSEDSEDSDNSE) are disordered.

It belongs to the mimivirus L17x/L18x family.

This is an uncharacterized protein from Acanthamoeba polyphaga mimivirus (APMV).